A 594-amino-acid chain; its full sequence is MNKYRTHTCSELTIDSRGKDVVLSGWINKKRDHGNLLFIDLRDNYGMTQCIIDKSNQNFNSLEKIQLESVIKINGKVVERTKETINTDLQTGEIEVNINSFEVLGTCKELPMPVFSDQEYAEEIRLKYRFLDLRRKKIHDNIILRSKVISFIRSEMSKLGFLEFQTPILTSSSPEGARDFLVPSRLNPGKFYALPQAPQQFKQLIMVSGFDKYFQIAPCFRDEDARADRSPGEFYQLDLEMSFVEQEDVFQVVEKLIVNVFKKFSEKKLMYEKFPRIPYEESMLKYGSDKPDLRNPLIISDLSNIFIRDDVTFEIFKKLVKSGSKVRCIVTKNTKDKPRSFFDNIDKWAKEQGASGLAYFTIEKEENISARGPVGKFFSKEALEEIMKITGAEIGDSIFFACGKINDVEKITSLARDKIAKDLKLIDENTFAFCWVVDYPMFEKNEVTNKIEFSHNPFSMPQGDLKDIDFDNPLNIKAYQYDIVCNGIELSSGAIRNHVPELMYKLFSIAGYQKEQVDEKFSGMINALSYGAPPHGGIAPGIDRIVMLLANEKNIREVTMFPMNQNAQDLMMNAPSNVNEEQLKELGLALKLKK.

Glu175 is a binding site for L-aspartate. Positions 199-202 (QQFK) are aspartate. L-aspartate contacts are provided by Arg221 and His455. 221-223 (RDE) serves as a coordination point for ATP. ATP is bound at residue Glu489. L-aspartate is bound at residue Arg496. Residue 541-544 (GIDR) coordinates ATP.

It belongs to the class-II aminoacyl-tRNA synthetase family. Type 1 subfamily. In terms of assembly, homodimer.

Its subcellular location is the cytoplasm. The enzyme catalyses tRNA(Asx) + L-aspartate + ATP = L-aspartyl-tRNA(Asx) + AMP + diphosphate. Aspartyl-tRNA synthetase with relaxed tRNA specificity since it is able to aspartylate not only its cognate tRNA(Asp) but also tRNA(Asn). Reaction proceeds in two steps: L-aspartate is first activated by ATP to form Asp-AMP and then transferred to the acceptor end of tRNA(Asp/Asn). In Pelagibacter ubique (strain HTCC1062), this protein is Aspartate--tRNA(Asp/Asn) ligase.